The primary structure comprises 263 residues: UPF0758 protein Pden_2304 (263 aa).

The MPN domain occupies 141–263 (VLTSWDALLD…ELSFRSEGLL (123 aa)). Zn(2+) contacts are provided by His-212, His-214, and Asp-225. The JAMM motif signature appears at 212-225 (HNHPSGDPTPSQAD).

Belongs to the UPF0758 family.

In Paracoccus denitrificans (strain Pd 1222), this protein is UPF0758 protein Pden_2304.